A 302-amino-acid polypeptide reads, in one-letter code: Dioxygenase olcK (302 aa).

The Fe cation site is built by H136, D138, and H213.

It belongs to the PhyH family. Homodimer. Requires Fe cation as cofactor.

It localises to the peroxisome matrix. It functions in the pathway secondary metabolite biosynthesis; terpenoid biosynthesis. Functionally, dioxygenase; part of the gene cluster that mediates the biosynthesis of 15-deoxyoxalicine B. The first step of the pathway is the synthesis of nicotinyl-CoA from nicotinic acid by the nicotinic acid-CoA ligase olcI. Nicotinyl-CoA is then a substrate of polyketide synthase olcA to produce 4-hydroxy-6-(3-pyridinyl)-2H-pyran-2-one (HPPO) which is further prenylated by the polyprenyl transferase olcH to yield geranylgeranyl-HPPO. Geranylgeranyl pyrophosphate is provided by the cluster-specific geranylgeranyl pyrophosphate synthase olcC. The FAD-dependent monooxygenase olcE catalyzes the epoxidation of geranylgeranyl-HPPO and the terpene cyclase olcD catalyzes the cyclization of the terpenoid component, resulting in the formation of the tricyclic terpene moiety seen in predecaturin E. The cytochrome P450 monooxygenase then catalyzes the allylic oxidation of predecaturin E, which is followed by spirocylization with concomitant loss of one molecule of water to form decaturin E. Decaturin E is the substrate of the cytochrome P450 monooxygenase olcJ which hydroxylates it at the C-29 position to form decaturin F. The short-chain dehydrogenase/reductase olcF may catalyze the oxidation of decaturin F to generate the 29-hydroxyl-27-one intermediate, and subsequent hemiacetal formation probably leads to the formation of decaturin C. The dioxygenase olcK may be a peroxisomal enzyme that catalyzes the hydroxylation of decaturin C into decaturin A once decaturin C is shuttled into the peroxisome by the MFS transporter olcL. Finally the cytochrome P450 monooxygenase olcB catalyzes the oxidative rearrangement to yield 15-deoxyoxalicine B. In the absence of olcJ, decaturin E may be shunted to a pathway in which it is oxidized to a ketone, possibly by olcF, to form decaturin D, which undergoes further allylic oxidation to yield decaturin G. Moreover, in the absence of oclK or oclL, oclB can convert decaturin C into 15-deoxyoxalicine A. This is Dioxygenase olcK from Penicillium canescens.